A 594-amino-acid chain; its full sequence is UvrABC system protein C (594 aa).

Residues 14-91 (DQPGCYLMKD…IKKHDPKYNI (78 aa)) enclose the GIY-YIG domain. The UVR domain maps to 196–231 (KEVRSELETKMYEASEKLEFERAKELRDQIAHIDAI).

Belongs to the UvrC family. Interacts with UvrB in an incision complex.

The protein localises to the cytoplasm. In terms of biological role, the UvrABC repair system catalyzes the recognition and processing of DNA lesions. UvrC both incises the 5' and 3' sides of the lesion. The N-terminal half is responsible for the 3' incision and the C-terminal half is responsible for the 5' incision. The chain is UvrABC system protein C from Bacillus cereus (strain AH187).